We begin with the raw amino-acid sequence, 75 residues long: Toxin-like peptide AaF1CA7 (75 aa).

An N-terminal signal peptide occupies residues 1–22 (MMKLMLFSIIVILFSLIGSIHG). In terms of domain architecture, LCN-type CS-alpha/beta spans 25-75 (VPGNYPLDSSDDTYLCAPLGENPSCIQICRKHGVKYGYCYAFQCWCEYFGR). Intrachain disulfides connect Cys-40–Cys-63, Cys-49–Cys-68, and Cys-53–Cys-70.

This sequence belongs to the long (3 C-C) scorpion toxin superfamily. As to expression, expressed by the venom gland.

It is found in the secreted. In terms of biological role, probable neurotoxin that inhibits ion channels. The polypeptide is Toxin-like peptide AaF1CA7 (Androctonus australis (Sahara scorpion)).